Here is a 130-residue protein sequence, read N- to C-terminus: MARVTVEDCIDKVDNRFDLVLLAAHRARMISSGSQLTIDRDNDKNPVVALREIAEQTISPEDMREELVHSLQKFVEVDEPESDTVPLIGSAGASVDADDTEVAVERMTEEELLKGLEGLAPPEEQPEEDE.

2 disordered regions span residues 79–98 (EPES…VDAD) and 108–130 (TEEE…EEDE).

Belongs to the RNA polymerase subunit omega family. As to quaternary structure, the RNAP catalytic core consists of 2 alpha, 1 beta, 1 beta' and 1 omega subunit. When a sigma factor is associated with the core the holoenzyme is formed, which can initiate transcription.

The enzyme catalyses RNA(n) + a ribonucleoside 5'-triphosphate = RNA(n+1) + diphosphate. Promotes RNA polymerase assembly. Latches the N- and C-terminal regions of the beta' subunit thereby facilitating its interaction with the beta and alpha subunits. This Nitrobacter winogradskyi (strain ATCC 25391 / DSM 10237 / CIP 104748 / NCIMB 11846 / Nb-255) protein is DNA-directed RNA polymerase subunit omega.